Consider the following 320-residue polypeptide: Probable cell division protein WhiA (320 aa).

The H-T-H motif DNA-binding region spans T276–A310.

Belongs to the WhiA family.

In terms of biological role, involved in cell division and chromosome segregation. The chain is Probable cell division protein WhiA from Geobacillus sp. (strain WCH70).